Consider the following 320-residue polypeptide: Aurora kinase B (320 aa).

The segment covering 1 to 10 (MQNKENREPR) has biased composition (basic and acidic residues). Positions 1–38 (MQNKENREPRVQQTPSAGVGPLRVEMNPDTHAVSGPGR) are disordered. In terms of domain architecture, Protein kinase spans 53–303 (FDIGRPLGKG…LRSVMEHPWV (251 aa)). ATP contacts are provided by residues 59-67 (LGKGKFGNV) and Lys-82. The active-site Proton acceptor is Asp-176.

It belongs to the protein kinase superfamily. Ser/Thr protein kinase family. Aurora subfamily. As to quaternary structure, component of the chromosomal passenger complex (CPC).

The protein resides in the nucleus. Its subcellular location is the chromosome. It localises to the centromere. It is found in the cytoplasm. The protein localises to the cytoskeleton. The protein resides in the spindle. Its subcellular location is the midbody. It catalyses the reaction L-seryl-[protein] + ATP = O-phospho-L-seryl-[protein] + ADP + H(+). It carries out the reaction L-threonyl-[protein] + ATP = O-phospho-L-threonyl-[protein] + ADP + H(+). Kinase activity is stimulated by cell-cycle specific phosphorylation. Its function is as follows. Serine/threonine-protein kinase component of the chromosomal passenger complex (CPC), a complex that acts as a key regulator of mitosis. The CPC complex has essential functions at the centromere in ensuring correct chromosome alignment and segregation and is required for chromatin-induced microtubule stabilization and spindle assembly. Involved in the bipolar attachment of spindle microtubules to kinetochores and is a key regulator for the onset of cytokinesis during mitosis. Required for central/midzone spindle assembly and cleavage furrow formation. Key component of the cytokinesis checkpoint, a process required to delay abscission to prevent both premature resolution of intercellular chromosome bridges and accumulation of DNA damage. Phosphorylates 'Ser-10' of histone H3 during mitosis. This is Aurora kinase B (aurkb) from Danio rerio (Zebrafish).